The chain runs to 281 residues: NADPH-dependent 7-cyano-7-deazaguanine reductase (281 aa).

Residue 87-89 (IES) coordinates substrate. 89 to 90 (SK) lines the NADPH pocket. Cysteine 188 functions as the Thioimide intermediate in the catalytic mechanism. The active-site Proton donor is aspartate 195. 227-228 (HE) lines the substrate pocket. NADPH is bound at residue 256–257 (RG). Positions 261–281 (INPYRSTEQDKPAHNHRMARQ) are disordered.

This sequence belongs to the GTP cyclohydrolase I family. QueF type 2 subfamily. In terms of assembly, homodimer.

Its subcellular location is the cytoplasm. The enzyme catalyses 7-aminomethyl-7-carbaguanine + 2 NADP(+) = 7-cyano-7-deazaguanine + 2 NADPH + 3 H(+). It participates in tRNA modification; tRNA-queuosine biosynthesis. Functionally, catalyzes the NADPH-dependent reduction of 7-cyano-7-deazaguanine (preQ0) to 7-aminomethyl-7-deazaguanine (preQ1). In Vibrio parahaemolyticus serotype O3:K6 (strain RIMD 2210633), this protein is NADPH-dependent 7-cyano-7-deazaguanine reductase.